Reading from the N-terminus, the 535-residue chain is Bifunctional purine biosynthesis protein PurH (535 aa).

The region spanning 1 to 145 is the MGS-like domain; it reads MAQTALISVS…KNWKDVGVLT (145 aa).

It belongs to the PurH family.

It carries out the reaction (6R)-10-formyltetrahydrofolate + 5-amino-1-(5-phospho-beta-D-ribosyl)imidazole-4-carboxamide = 5-formamido-1-(5-phospho-D-ribosyl)imidazole-4-carboxamide + (6S)-5,6,7,8-tetrahydrofolate. It catalyses the reaction IMP + H2O = 5-formamido-1-(5-phospho-D-ribosyl)imidazole-4-carboxamide. It participates in purine metabolism; IMP biosynthesis via de novo pathway; 5-formamido-1-(5-phospho-D-ribosyl)imidazole-4-carboxamide from 5-amino-1-(5-phospho-D-ribosyl)imidazole-4-carboxamide (10-formyl THF route): step 1/1. It functions in the pathway purine metabolism; IMP biosynthesis via de novo pathway; IMP from 5-formamido-1-(5-phospho-D-ribosyl)imidazole-4-carboxamide: step 1/1. The polypeptide is Bifunctional purine biosynthesis protein PurH (Variovorax paradoxus (strain S110)).